A 1254-amino-acid polypeptide reads, in one-letter code: Unconventional myosin-VI (1254 aa).

The 52-residue stretch at 2–53 (EDGKPVWAPHPTDGFQVGNIVDIGPDSLTIEPLNQKGKTFLALINQVFPAEE) folds into the Myosin N-terminal SH3-like domain. The Myosin motor domain occupies 57–772 (KDVEDNCSLM…KFAEFDQIMK (716 aa)). 151 to 158 (GESGAGKT) provides a ligand contact to ATP. At S267 the chain carries Phosphoserine. Residues 273–317 (YLNRGCTRYFANKETDKQILQNRKSPEYLKAGSLKDPLLDDHGDF) are responsible for slow ATPase activity. A Phosphothreonine modification is found at T406. S605 bears the Phosphoserine mark. The tract at residues 666-673 (FIRCIKPN) is actin-binding. The required for binding calmodulin stretch occupies residues 783-811 (KRVNHWLICSRWKKVQWCSLSVIKLKNKI). The 30-residue stretch at 814 to 843 (RAEACIKMQKTIRMWLCKRRHKPRIDGLVK) folds into the IQ domain. A three-helix bundle region spans residues 836–917 (PRIDGLVKVG…AVLLSALQKK (82 aa)). The interval 918-985 (KQQEEEAERL…EDDEKRIQAE (68 aa)) is SAH. The disordered stretch occupies residues 935–956 (EKERKRREEDEQRRRKEEEERR). At S1026 the chain carries Phosphoserine. Residues 1037–1245 (RGPAVQATKA…ESRQARPTYA (209 aa)) are interaction with TAX1BP1 and CALCOCO2/NDP52. Residues 1085–1087 (RRL) are interaction with OPTN. Residues 1096–1117 (KNKKRNTETEQRAPKSVTDYAQ) are disordered. An interaction with TOM1 region spans residues 1117–1245 (QQNPAVQLPA…ESRQARPTYA (129 aa)).

The protein belongs to the TRAFAC class myosin-kinesin ATPase superfamily. Myosin family. In terms of assembly, homodimer; dimerization seems to implicate the unfolding of the three-helix bundle region creating an additional calmodulin binding site, and cargo binding. Component of the DISP/DOCK7-induced septin displacement complex, at least composed of DOCK7, LRCH3 and MYO6. Able to function as a monomer under specific conditions in vitro. Forms a complex with CFTR and DAB2 in the apical membrane of epithelial cells. Binding to calmodulin through a unique insert, not found in other myosins, located in the neck region between the motor domain and the IQ domain appears to contribute to the directionality reversal. This interaction occurs only if the C-terminal lobe of calmodulin is occupied by calcium. Interaction with F-actin/ACTN1 occurs only at the apical brush border domain of the proximal tubule cells. Interacts with DAB2. In vitro, the C-terminal globular tail binds a C-terminal region of DAB2. Interacts with CFTR. Interacts with CABP5. Interacts (via residues 1117-1245) with TOM1 (via residues 392-463). Interacts (via residues 1060-1285) with OPTN. Interacts (via residues 1060-1285) with TAX1BP1 and CALCOCO2/NDP52. Interacts with TOM1L2. Interacts with CLIC5; may work together in a complex which also includes RDX and MYO6 to stabilize linkages between the plasma membrane and subjacent actin cytoskeleton at the base of stereocilia. In terms of processing, phosphorylation in the motor domain, induced by EGF, results in translocation of MYO6 from the cell surface to membrane ruffles and affects F-actin dynamics. Phosphorylated in vitro by p21-activated kinase (PAK). In terms of tissue distribution, expressed in all tissues examined including kidney cortex, intestinal mucosa, liver, lung, heart, jowl muscle, brain cortex and medulla, and in the epithelial cell line, LLC-PK1 (at protein level). In the kidney, located to the brush border of adult kidney proximal tubule cells.

The protein resides in the golgi apparatus. It localises to the trans-Golgi network membrane. Its subcellular location is the nucleus. It is found in the cytoplasm. The protein localises to the perinuclear region. The protein resides in the membrane. It localises to the clathrin-coated pit. Its subcellular location is the cytoplasmic vesicle. It is found in the clathrin-coated vesicle. The protein localises to the cell projection. The protein resides in the filopodium. It localises to the ruffle membrane. Its subcellular location is the microvillus. It is found in the cytosol. Its function is as follows. Myosins are actin-based motor molecules with ATPase activity. Unconventional myosins serve in intracellular movements. Myosin 6 is a reverse-direction motor protein that moves towards the minus-end of actin filaments. Has slow rate of actin-activated ADP release due to weak ATP binding. Functions in a variety of intracellular processes such as vesicular membrane trafficking and cell migration. Required for the structural integrity of the Golgi apparatus via the p53-dependent pro-survival pathway. Appears to be involved in a very early step of clathrin-mediated endocytosis in polarized epithelial cells. Together with TOM1, mediates delivery of endocytic cargo to autophagosomes thereby promoting autophagosome maturation and driving fusion with lysosomes. Links TOM1 with autophagy receptors, such as TAX1BP1; CALCOCO2/NDP52 and OPTN. May act as a regulator of F-actin dynamics. As part of the DISP complex, may regulate the association of septins with actin and thereby regulate the actin cytoskeleton. May play a role in transporting DAB2 from the plasma membrane to specific cellular targets. May play a role in the extension and network organization of neurites. Required for structural integrity of inner ear hair cells. Required for the correct localization of CLIC5 and RDX at the stereocilium base. Modulates RNA polymerase II-dependent transcription. This is Unconventional myosin-VI (MYO6) from Sus scrofa (Pig).